Reading from the N-terminus, the 357-residue chain is Protein RecA (357 aa).

73–80 (GPESSGKT) contributes to the ATP binding site.

This sequence belongs to the RecA family.

Its subcellular location is the cytoplasm. Functionally, can catalyze the hydrolysis of ATP in the presence of single-stranded DNA, the ATP-dependent uptake of single-stranded DNA by duplex DNA, and the ATP-dependent hybridization of homologous single-stranded DNAs. It interacts with LexA causing its activation and leading to its autocatalytic cleavage. In Methylibium petroleiphilum (strain ATCC BAA-1232 / LMG 22953 / PM1), this protein is Protein RecA.